The primary structure comprises 495 residues: MSVSDKDFKDIELLPVKSIESKDSIDQCDPLTWPIRIRIINTIIISFMTMLCMYGSSVFMPSIPELCEKFGEPETLVVLGATLYVIGVMLGPLIFSPLSELYGRRPLNIFGYTLFALMQIPTALSVNLAMFVVFRFFSGFFGSVGLGIGAGSLSDMFSKRDRGKYIGIYFLGICLGPAIAPIASGFIAGSSISWRWEFWILLMLSGVSLLAGVVFLKETYAPVLKRKQAKKLLEKQENQKSVEVKISEITESSQQIDPDKSFAEVVHILVTTIRRPLHLLCTQPIMILISLIVGTVYGILYLLFTAFAEVWISQYHFTSGLSGLTYISLSIGQVFAVFVLLPLNQKYWLSAVQKNNGVPEPEFRLPMAFLGCFAIMTGMFIFGWTVQYKVFWFVPLIGTTLVGAGFVMTFNPMNMFIVDNYGRYAASAMAAIAIPRNIFGACFPLFAEKLFERLGYGWGSSLLAFLLVAINFSIAALYMFGKTIREKRPFDHTKY.

The next 12 membrane-spanning stretches (helical) occupy residues Ile-43–Ile-63, Thr-75–Phe-95, Pro-106–Val-126, Leu-128–Ile-148, Ile-168–Ala-188, Trp-196–Leu-216, Pro-284–Phe-304, Gly-323–Leu-343, Pro-366–Val-386, Val-390–Phe-410, Ala-426–Phe-446, and Ser-461–Gly-481.

It belongs to the major facilitator superfamily. CAR1 family.

The protein localises to the membrane. This is an uncharacterized protein from Schizosaccharomyces pombe (strain 972 / ATCC 24843) (Fission yeast).